A 718-amino-acid polypeptide reads, in one-letter code: Putative aminodeoxychorismate synthase (718 aa).

The Glutamine amidotransferase type-1 domain occupies 9–203; that stretch reads QILLIDCYDS…LSLADTPNIQ (195 aa). The active-site Nucleophile is cysteine 88. Catalysis depends on residues histidine 177 and glutamate 179. Positions 266-718 are PABB component; that stretch reads FLDSAKKPGR…NLKNKKRSCK (453 aa).

The protein in the C-terminal section; belongs to the anthranilate synthase component I family.

It is found in the cytoplasm. It localises to the nucleus. The enzyme catalyses chorismate + L-glutamine = 4-amino-4-deoxychorismate + L-glutamate. It participates in cofactor biosynthesis; tetrahydrofolate biosynthesis; 4-aminobenzoate from chorismate: step 1/2. In terms of biological role, catalyzes the biosynthesis of 4-amino-4-deoxychorismate (ADC) from chorismate and glutamine. Required for the synthesis of 4-aminobenzoate (PABA), an important component in tetrahydrofolate biosynthesis. This Schizosaccharomyces pombe (strain 972 / ATCC 24843) (Fission yeast) protein is Putative aminodeoxychorismate synthase.